Here is a 79-residue protein sequence, read N- to C-terminus: Small ribosomal subunit protein bS18c (79 aa).

It belongs to the bacterial ribosomal protein bS18 family. As to quaternary structure, part of the 30S ribosomal subunit.

The protein localises to the plastid. The protein resides in the chloroplast. This chain is Small ribosomal subunit protein bS18c, found in Physcomitrium patens (Spreading-leaved earth moss).